The primary structure comprises 188 residues: MLVAAFAAAGEEVEGNPTYPILPHLGELIVGIIFAIIIYAVIAKKVVPRLEAMYEERRAAIEGNVEKAEKAQAEAQVALEQYKAQLADARGEANRIREEARQQGAQILAEMREQAQAESERITTAARATIEAERVQATAQLRAEVGRLATDLAGRIVGESLQDSARQSGVVDRFLADLERSESGASSR.

The helical transmembrane segment at 21 to 41 (ILPHLGELIVGIIFAIIIYAV) threads the bilayer.

This sequence belongs to the ATPase B chain family. In terms of assembly, F-type ATPases have 2 components, F(1) - the catalytic core - and F(0) - the membrane proton channel. F(1) has five subunits: alpha(3), beta(3), gamma(1), delta(1), epsilon(1). F(0) has three main subunits: a(1), b(2) and c(10-14). The alpha and beta chains form an alternating ring which encloses part of the gamma chain. F(1) is attached to F(0) by a central stalk formed by the gamma and epsilon chains, while a peripheral stalk is formed by the delta and b chains.

It localises to the cell membrane. In terms of biological role, f(1)F(0) ATP synthase produces ATP from ADP in the presence of a proton or sodium gradient. F-type ATPases consist of two structural domains, F(1) containing the extramembraneous catalytic core and F(0) containing the membrane proton channel, linked together by a central stalk and a peripheral stalk. During catalysis, ATP synthesis in the catalytic domain of F(1) is coupled via a rotary mechanism of the central stalk subunits to proton translocation. Functionally, component of the F(0) channel, it forms part of the peripheral stalk, linking F(1) to F(0). In Kineococcus radiotolerans (strain ATCC BAA-149 / DSM 14245 / SRS30216), this protein is ATP synthase subunit b.